Here is a 2136-residue protein sequence, read N- to C-terminus: Methylcytosine dioxygenase TET1 (2136 aa).

Basic residues-rich tracts occupy residues 1–12 (MSRSRHARPSRL) and 20–31 (KKKKNSQLRKTT). The disordered stretch occupies residues 1–47 (MSRSRHARPSRLVRKEDVNKKKKNSQLRKTTKGANKNVASVKTLSPG). Over residues 32–43 (KGANKNVASVKT) the composition is skewed to polar residues. Residues 528–674 (LGIAQLSQAG…NGPKSESMDY (147 aa)) are sufficient for binding to genomic CpG islands. A CXXC-type zinc finger spans residues 584-625 (EKKKRKRCGVCEPCQQKTNCGECTYCKNRKNSHQICKKRKCE). 8 residues coordinate Zn(2+): Cys591, Cys594, Cys597, Cys603, Cys606, Cys609, Cys619, and Cys624. Basic and acidic residues-rich tracts occupy residues 712-724 (QNKKSQLTDHVKG), 732-743 (EAEKSKNSEVDK), and 849-869 (IHNEGDQPKTPENIPSKEPKD). Disordered regions lie at residues 712–746 (QNKKSQLTDHVKGDFSANVPEAEKSKNSEVDKKRT), 849–876 (IHNEGDQPKTPENIPSKEPKDGSPVQPS), 899–923 (QLSEAPSENSSPSKSEKDEESEQRT), and 1119–1169 (EKGT…VSYQ). Ser871 is subject to Phosphoserine. The span at 901 to 911 (SEAPSENSSPS) shows a compositional bias: low complexity. Over residues 1119–1139 (EKGTIQQKPPSSVHNNHGSSL) the composition is skewed to polar residues. Residues 1146 to 1163 (TQKKTKSTPSRDRRKKKP) show a composition bias toward basic residues. Zn(2+)-binding residues include Cys1422, Cys1424, Cys1482, His1508, and Cys1510. Arg1551 lines the 2-oxoglutarate pocket. Residues Cys1561, Cys1563, Cys1579, and Cys1588 each contribute to the Zn(2+) site. The tract at residues 1580–1593 (SWSMYFNGCKFGRS) is interaction with DNA. Lys1589 participates in a covalent cross-link: Glycyl lysine isopeptide (Lys-Gly) (interchain with G-Cter in ubiquitin). Cys1648 contacts Zn(2+). Cys1664 lines the 2-oxoglutarate pocket. His1670 serves as a coordination point for Zn(2+). The Fe cation site is built by His1672 and Asp1674. Asn1677 lines the substrate pocket. His1706 lines the 2-oxoglutarate pocket. Disordered regions lie at residues 1774–1897 (EKKP…AAAD) and 1919–1984 (EPLI…SPAE). Low complexity predominate over residues 1786–1800 (NSTTTNNSKPSSLPT). 2 stretches are compositionally biased toward polar residues: residues 1824-1833 (SSDNTKTYSL) and 1937-1953 (HQPNHQPSFLTSPQDLA). Residues 1957–1976 (MEEDEQHSEADEPPSDEPLS) are compositionally biased toward acidic residues. His2028 serves as a coordination point for Fe cation. 2043 to 2045 (RLS) is a 2-oxoglutarate binding site. 2049 to 2051 (YQH) is a substrate binding site. Zn(2+) is bound at residue His2059. Over residues 2074–2087 (KNKKMKASEQKDQA) the composition is skewed to basic and acidic residues. Residues 2074–2100 (KNKKMKASEQKDQAANEGPEQSSEVNE) form a disordered region.

This sequence belongs to the TET family. As to quaternary structure, interacts with SIN3A; recruits the transcriptional corepressor SIN3A to gene promoters. Interacts with HCFC1. Interacts (via C-terminus) with OGT. Found in a complex composed of at least SINHCAF, SIN3A, HDAC1, SAP30, RBBP4, OGT and TET1. Interacts with QSER1. Interacts with NONO (via DNA-binding domain); this interaction recruits TET1 to genomic loci. Interacts with FOXA2; this interaction may recruit TET1 to specific enhancers to preserve their unmethylated status and hence allowing gene expression. Interacts with RNF2. Directly interacts (via C-terminus) with the DCAF1 component of the CRL4(VprBP) E3 ubiquitin-protein ligase complex. Interacts with UHRF1; this interaction induces the recruitment of TET1 to replicating heterochromatin. Interacts with DCAF1. It depends on Fe(2+) as a cofactor. The cofactor is Zn(2+). Post-translationally, glycosylated. Interaction with OGT leads to GlcNAcylation. In terms of processing, monoubiquitinated at Lys-1589 by the DCX (DDB1-CUL4-X-box) E3 ubiquitin-protein ligase complex called CRL4(VprBP) or CUL4A-RBX1-DDB1-DCAF1/VPRBP complex; this modification promotes binding to DNA. Expressed in fetal heart, lung and brain, and in adult skeletal muscle, thymus and ovary. Not detected in adult heart, lung or brain. Up-regulated in glioblastoma cells (at protein level). As to expression, expressed in embryonic stem cells (at protein level).

It localises to the nucleus. Its subcellular location is the chromosome. The catalysed reaction is a 5-methyl-2'-deoxycytidine in DNA + 2-oxoglutarate + O2 = a 5-hydroxymethyl-2'-deoxycytidine in DNA + succinate + CO2. The enzyme catalyses a 5-hydroxymethyl-2'-deoxycytidine in DNA + 2-oxoglutarate + O2 = a 5-formyl-2'-deoxycytidine in DNA + succinate + CO2 + H2O. It catalyses the reaction a 5-formyl-2'-deoxycytidine in DNA + 2-oxoglutarate + O2 = a 5-carboxyl-2'-deoxycytidine in DNA + succinate + CO2 + H(+). Its function is as follows. Dioxygenase that plays a key role in active DNA demethylation, by catalyzing the sequential oxidation of the modified genomic base 5-methylcytosine (5mC) into 5-hydroxymethylcytosine (5hmC), 5-formylcytosine (5fC), and 5-carboxylcytosine (5caC). In addition to its role in DNA demethylation, plays a more general role in chromatin regulation by recruiting histone modifying protein complexes to alter histone marks and chromatin accessibility, leading to both activation and repression of gene expression. Plays therefore a role in many biological processes, including stem cell maintenance, T- and B-cell development, inflammation regulation, genomic imprinting, neural activity or DNA repair. Involved in the balance between pluripotency and lineage commitment of cells and plays a role in embryonic stem cells maintenance and inner cell mass cell specification. Together with QSER1, plays an essential role in the protection and maintenance of transcriptional and developmental programs to inhibit the binding of DNMT3A/3B and therefore de novo methylation. May play a role in pancreatic beta-cell specification during development. In this context, may function as an upstream epigenetic regulator of PAX4 presumably through direct recruitment by FOXA2 to a PAX4 enhancer to preserve its unmethylated status, thereby potentiating PAX4 expression to adopt beta-cell fate during endocrine lineage commitment. Under DNA hypomethylation conditions, such as in female meiotic germ cells, may induce epigenetic reprogramming of pericentromeric heterochromatin (PCH), the constitutive heterochromatin of pericentromeric regions. PCH forms chromocenters in the interphase nucleus and chromocenters cluster at the prophase of meiosis. In this context, may also be essential for chromocenter clustering in a catalytic activity-independent manner, possibly through the recruitment polycomb repressive complex 1 (PRC1) to the chromocenters. During embryonic development, may be required for normal meiotic progression in oocytes and meiotic gene activation. Binds preferentially to DNA containing cytidine-phosphate-guanosine (CpG) dinucleotides over CpH (H=A, T, and C), hemimethylated-CpG and hemimethylated-hydroxymethyl-CpG. In terms of biological role, dioxygenase that plays a key role in active DNA demethylation. Binds to promoters, particularly to those with high CG content. In hippocampal neurons, isoform 1 regulates the expression of a unique subset of genes compared to isoform 2, although some overlap exists between both isoforms, hence differentially regulates excitatory synaptic transmission. In hippocampal neuron cell cultures, isoform 1 controls both miniature excitatory postsynaptic current amplitude and frequency. Isoform 1 may regulate genes involved in hippocampal-dependent memory, leading to positive regulation of memory, contrary to isoform 2 that may decrease memory. Dioxygenase that plays a key role in active DNA demethylation. As isoform 1, binds to promoters, particularly to those with high CG content, however displays reduced global chromatin affinity compared with isoform 1, leading to decreased global DNA demethylation compared with isoform 1. Contrary to isoform 1, isoform 2 localizes during S phase to sites of ongoing DNA replication in heterochromatin, causing a significant de novo 5hmC formation, globally, and more so in heterochromatin, including LINE 1 interspersed DNA repeats leading to their activation. In hippocampal neurons, isoform 2 regulates the expression of a unique subset of genes compared to isoform 1, although some overlap between both isoforms, hence differentially regulates excitatory synaptic transmission. In hippocampal neuron cell cultures, isoform 2 controls miniature excitatory postsynaptic current frequency, but not amplitude. Isoform 2 may regulate genes involved in hippocampal-dependent memory, leading to negative regulation of memory, contrary to isoform 1 that may improve memory. In immature and partially differentiated gonadotrope cells, directly represses luteinizing hormone gene LHB expression and does not catalyze 5hmC at the gene promoter. This Homo sapiens (Human) protein is Methylcytosine dioxygenase TET1.